Reading from the N-terminus, the 383-residue chain is Probable purine permease 16 (383 aa).

The next 10 helical transmembrane spans lie at 30–50 (ISVF…MLLL), 72–92 (WTQA…FFIL), 113–133 (VLSL…LYAL), 138–158 (VGWG…SAFI), 166–186 (WIII…PAFA), 203–223 (LILI…QLGF), 247–267 (ICVS…SGEF), 297–317 (VWAV…ADVV), 322–342 (SPVV…EFGW), and 346–363 (GALL…YSLH).

This sequence belongs to the purine permeases (TC 2.A.7.14) family.

The protein localises to the membrane. The chain is Probable purine permease 16 (PUP16) from Arabidopsis thaliana (Mouse-ear cress).